Here is a 79-residue protein sequence, read N- to C-terminus: ATP synthase subunit c (79 aa).

The next 2 helical transmembrane spans lie at 11–31 (MAAA…IGIL) and 53–73 (FFIV…LGLY).

The protein belongs to the ATPase C chain family. As to quaternary structure, F-type ATPases have 2 components, F(1) - the catalytic core - and F(0) - the membrane proton channel. F(1) has five subunits: alpha(3), beta(3), gamma(1), delta(1), epsilon(1). F(0) has three main subunits: a(1), b(2) and c(10-14). The alpha and beta chains form an alternating ring which encloses part of the gamma chain. F(1) is attached to F(0) by a central stalk formed by the gamma and epsilon chains, while a peripheral stalk is formed by the delta and b chains.

It localises to the cell inner membrane. In terms of biological role, f(1)F(0) ATP synthase produces ATP from ADP in the presence of a proton or sodium gradient. F-type ATPases consist of two structural domains, F(1) containing the extramembraneous catalytic core and F(0) containing the membrane proton channel, linked together by a central stalk and a peripheral stalk. During catalysis, ATP synthesis in the catalytic domain of F(1) is coupled via a rotary mechanism of the central stalk subunits to proton translocation. Its function is as follows. Key component of the F(0) channel; it plays a direct role in translocation across the membrane. A homomeric c-ring of between 10-14 subunits forms the central stalk rotor element with the F(1) delta and epsilon subunits. The polypeptide is ATP synthase subunit c (Yersinia enterocolitica serotype O:8 / biotype 1B (strain NCTC 13174 / 8081)).